The sequence spans 211 residues: 2,3-bisphosphoglycerate-dependent phosphoglycerate mutase (211 aa).

Residues 9-16 (RHGQSDWN), 22-23 (TG), R61, 88-91 (ERDY), K99, 115-116 (RR), and 159-160 (GN) each bind substrate. H10 functions as the Tele-phosphohistidine intermediate in the catalytic mechanism. E88 functions as the Proton donor/acceptor in the catalytic mechanism.

The protein belongs to the phosphoglycerate mutase family. BPG-dependent PGAM subfamily. Homodimer.

It catalyses the reaction (2R)-2-phosphoglycerate = (2R)-3-phosphoglycerate. It functions in the pathway carbohydrate degradation; glycolysis; pyruvate from D-glyceraldehyde 3-phosphate: step 3/5. In terms of biological role, catalyzes the interconversion of 2-phosphoglycerate and 3-phosphoglycerate. In Rhizobium meliloti (strain 1021) (Ensifer meliloti), this protein is 2,3-bisphosphoglycerate-dependent phosphoglycerate mutase.